Reading from the N-terminus, the 261-residue chain is Flagellar L-ring protein (261 aa).

A signal peptide spans 1-18 (MAAMKRLLASSLLILLSG). C19 is lipidated: N-palmitoyl cysteine. The S-diacylglycerol cysteine moiety is linked to residue C19. The interval 37-67 (TVDAVEGDKSESNSGLTDALRNRTDPVAGDP) is disordered.

This sequence belongs to the FlgH family. The basal body constitutes a major portion of the flagellar organelle and consists of four rings (L,P,S, and M) mounted on a central rod.

Its subcellular location is the cell outer membrane. It localises to the bacterial flagellum basal body. In terms of biological role, assembles around the rod to form the L-ring and probably protects the motor/basal body from shearing forces during rotation. The sequence is that of Flagellar L-ring protein from Vibrio cholerae serotype O1 (strain ATCC 39541 / Classical Ogawa 395 / O395).